The primary structure comprises 216 residues: GTP:AMP phosphotransferase, mitochondrial (216 aa).

Residue 15 to 20 (GSGKGT) participates in GTP binding. The NMPbind stretch occupies residues 35–64 (STGDILRQNIIKNTELGKKAKQYIAEGKLV). AMP contacts are provided by residues Thr-36, Arg-41, 62-64 (KLV), 89-92 (GFPR), and Gln-96. The tract at residues 125–162 (NRWIHAPSGRVYNIGFKNPKVPGKDDVTGEPLMQREDD) is LID. GTP contacts are provided by residues Arg-126 and 135 to 136 (VY). AMP is bound by residues Arg-159 and Arg-170. Residue Thr-199 coordinates GTP.

This sequence belongs to the adenylate kinase family. AK3 subfamily. Monomer. Ubiquitously expressed with highest levels expressed in the abdomen, suggesting a function in muscle tissues.

Its subcellular location is the mitochondrion matrix. It catalyses the reaction a ribonucleoside 5'-triphosphate + AMP = a ribonucleoside 5'-diphosphate + ADP. In terms of biological role, involved in maintaining the homeostasis of cellular nucleotides by catalyzing the interconversion of nucleoside phosphates. Has GTP:AMP phosphotransferase and ITP:AMP phosphotransferase activities. This chain is GTP:AMP phosphotransferase, mitochondrial, found in Drosophila melanogaster (Fruit fly).